Here is a 130-residue protein sequence, read N- to C-terminus: MAKRKGARKKIVKKNIARGVVYINATFNNTVVTVTDEMGNVIAWSSAGSLGFKGSKKSTPFAAQQAVEDAMAKAKEHGIKEVGIKVQGPGSGRDTAVKSVGAIEGIRVLFFKDITPLPHNGCRPPKRRRV.

The protein belongs to the universal ribosomal protein uS11 family. In terms of assembly, part of the 30S ribosomal subunit. Interacts with proteins S7 and S18. Binds to IF-3.

Its function is as follows. Located on the platform of the 30S subunit, it bridges several disparate RNA helices of the 16S rRNA. Forms part of the Shine-Dalgarno cleft in the 70S ribosome. The polypeptide is Small ribosomal subunit protein uS11 (Nitratiruptor sp. (strain SB155-2)).